The primary structure comprises 590 residues: UvrABC system protein C (590 aa).

The 78-residue stretch at 15–92 (DLPGCYMMKD…IQKHKPYYNI (78 aa)) folds into the GIY-YIG domain. One can recognise a UVR domain in the interval 197–232 (SKIKKELEQKMETASENLEFERAAEIRDQIHYVEMT).

The protein belongs to the UvrC family. In terms of assembly, interacts with UvrB in an incision complex.

It is found in the cytoplasm. In terms of biological role, the UvrABC repair system catalyzes the recognition and processing of DNA lesions. UvrC both incises the 5' and 3' sides of the lesion. The N-terminal half is responsible for the 3' incision and the C-terminal half is responsible for the 5' incision. This chain is UvrABC system protein C, found in Ligilactobacillus salivarius (strain UCC118) (Lactobacillus salivarius).